The sequence spans 339 residues: Lipoyl synthase (339 aa).

A disordered region spans residues 13-35 (RPKLDAPARPRHPEKAHRPDTAI). [4Fe-4S] cluster contacts are provided by cysteine 68, cysteine 73, cysteine 79, cysteine 94, cysteine 98, cysteine 101, and serine 307. The region spanning 80–296 (WEKRHATFMI…ETTAYAKGFL (217 aa)) is the Radical SAM core domain.

It belongs to the radical SAM superfamily. Lipoyl synthase family. Requires [4Fe-4S] cluster as cofactor.

The protein localises to the cytoplasm. It catalyses the reaction [[Fe-S] cluster scaffold protein carrying a second [4Fe-4S](2+) cluster] + N(6)-octanoyl-L-lysyl-[protein] + 2 oxidized [2Fe-2S]-[ferredoxin] + 2 S-adenosyl-L-methionine + 4 H(+) = [[Fe-S] cluster scaffold protein] + N(6)-[(R)-dihydrolipoyl]-L-lysyl-[protein] + 4 Fe(3+) + 2 hydrogen sulfide + 2 5'-deoxyadenosine + 2 L-methionine + 2 reduced [2Fe-2S]-[ferredoxin]. The protein operates within protein modification; protein lipoylation via endogenous pathway; protein N(6)-(lipoyl)lysine from octanoyl-[acyl-carrier-protein]: step 2/2. Catalyzes the radical-mediated insertion of two sulfur atoms into the C-6 and C-8 positions of the octanoyl moiety bound to the lipoyl domains of lipoate-dependent enzymes, thereby converting the octanoylated domains into lipoylated derivatives. The chain is Lipoyl synthase from Methylorubrum extorquens (strain CM4 / NCIMB 13688) (Methylobacterium extorquens).